Here is an 84-residue protein sequence, read N- to C-terminus: UPF0729 protein F18A11.3 (84 aa).

The helical transmembrane segment at 1 to 21 (MVCLPCIFLPIMMAIYMKFIM) threads the bilayer.

Belongs to the UPF0729 family.

Its subcellular location is the cell membrane. The chain is UPF0729 protein F18A11.3 from Caenorhabditis elegans.